Consider the following 186-residue polypeptide: Casparian strip membrane protein 6 (186 aa).

At 1 to 23 (MKAGPIELGEGKSSAPKAAVNRG) the chain is on the cytoplasmic side. A helical transmembrane segment spans residues 24–44 (VAILDFILRILAFIGTLGSAI). Residues 45 to 73 (SMATTNETLPFFTQFIRFRAEYDDLPTFT) are Extracellular-facing. An N-linked (GlcNAc...) asparagine glycan is attached at asparagine 50. Residues 74–94 (FFVVANGVVSAYLLFSLPFSI) form a helical membrane-spanning segment. The Cytoplasmic portion of the chain corresponds to 95–106 (FNIVRSKAQNSR). Residues 107–127 (ILLIILDTAMLGLLSAGASAA) traverse the membrane as a helical segment. The Extracellular portion of the chain corresponds to 128 to 160 (AAIVYLAHQGNVRTNWSAICQQFNSFCERISGS). Asparagine 142 is a glycosylation site (N-linked (GlcNAc...) asparagine). Residues 161 to 181 (LIGSFIGVVVFILLISLSAVA) traverse the membrane as a helical segment. The Cytoplasmic portion of the chain corresponds to 182 to 186 (LSRHK).

This sequence belongs to the Casparian strip membrane proteins (CASP) family. Homodimer and heterodimers.

The protein resides in the cell membrane. In terms of biological role, regulates membrane-cell wall junctions and localized cell wall deposition. Required for establishment of the Casparian strip membrane domain (CSD) and the subsequent formation of Casparian strips, a cell wall modification of the root endodermis that determines an apoplastic barrier between the intraorganismal apoplasm and the extraorganismal apoplasm and prevents lateral diffusion. The protein is Casparian strip membrane protein 6 of Populus trichocarpa (Western balsam poplar).